Here is a 397-residue protein sequence, read N- to C-terminus: Chorismate synthase (397 aa).

The NADP(+) site is built by arginine 40 and arginine 46. FMN contacts are provided by residues 129-131, 257-258, glycine 302, 317-321, and arginine 343; these read RSS, QA, and KPISS.

This sequence belongs to the chorismate synthase family. As to quaternary structure, homotetramer. FMNH2 serves as cofactor.

The catalysed reaction is 5-O-(1-carboxyvinyl)-3-phosphoshikimate = chorismate + phosphate. It participates in metabolic intermediate biosynthesis; chorismate biosynthesis; chorismate from D-erythrose 4-phosphate and phosphoenolpyruvate: step 7/7. Functionally, catalyzes the anti-1,4-elimination of the C-3 phosphate and the C-6 proR hydrogen from 5-enolpyruvylshikimate-3-phosphate (EPSP) to yield chorismate, which is the branch point compound that serves as the starting substrate for the three terminal pathways of aromatic amino acid biosynthesis. This reaction introduces a second double bond into the aromatic ring system. This Chlorobaculum tepidum (strain ATCC 49652 / DSM 12025 / NBRC 103806 / TLS) (Chlorobium tepidum) protein is Chorismate synthase.